Here is a 258-residue protein sequence, read N- to C-terminus: Thiamine thiazole synthase (258 aa).

NAD(+)-binding positions include Ala36, 55 to 56 (EK), Gly63, Val127, and 154 to 156 (HVD). Residues Asp156 and His171 each contribute to the Fe cation site. Met224 contributes to the NAD(+) binding site. Glycine is bound at residue Arg234.

Belongs to the THI4 family. Homooctamer; tetramer of dimers. Fe(2+) is required as a cofactor.

The enzyme catalyses hydrogen sulfide + glycine + NAD(+) = ADP-5-ethyl-4-methylthiazole-2-carboxylate + nicotinamide + 3 H2O + H(+). Its pathway is cofactor biosynthesis; thiamine diphosphate biosynthesis. Involved in the biosynthesis of the thiazole moiety of thiamine. Catalyzes the conversion of NAD and glycine to adenosine diphosphate 5-(2-hydroxyethyl)-4-methylthiazole-2-carboxylate (ADT), an adenylated thiazole intermediate, using free sulfide as a source of sulfur. The chain is Thiamine thiazole synthase from Methanococcoides burtonii (strain DSM 6242 / NBRC 107633 / OCM 468 / ACE-M).